Reading from the N-terminus, the 156-residue chain is Large ribosomal subunit protein uL15 (156 aa).

Residues 25–49 form a disordered region; it reads RGIGCGKGKTSGRGHKGQKARSGTS. Residues 34–43 are compositionally biased toward basic residues; the sequence is TSGRGHKGQK.

Belongs to the universal ribosomal protein uL15 family. As to quaternary structure, part of the 50S ribosomal subunit.

Its function is as follows. Binds to the 23S rRNA. The protein is Large ribosomal subunit protein uL15 of Wolbachia sp. subsp. Brugia malayi (strain TRS).